Here is a 168-residue protein sequence, read N- to C-terminus: Protein-export protein SecB (168 aa).

It belongs to the SecB family. As to quaternary structure, homotetramer, a dimer of dimers. One homotetramer interacts with 1 SecA dimer.

Its subcellular location is the cytoplasm. Functionally, one of the proteins required for the normal export of preproteins out of the cell cytoplasm. It is a molecular chaperone that binds to a subset of precursor proteins, maintaining them in a translocation-competent state. It also specifically binds to its receptor SecA. The protein is Protein-export protein SecB of Saccharophagus degradans (strain 2-40 / ATCC 43961 / DSM 17024).